We begin with the raw amino-acid sequence, 296 residues long: Ribosomal protein L11 methyltransferase (296 aa).

S-adenosyl-L-methionine-binding residues include threonine 151, glycine 172, aspartate 194, and asparagine 233.

This sequence belongs to the methyltransferase superfamily. PrmA family.

Its subcellular location is the cytoplasm. It carries out the reaction L-lysyl-[protein] + 3 S-adenosyl-L-methionine = N(6),N(6),N(6)-trimethyl-L-lysyl-[protein] + 3 S-adenosyl-L-homocysteine + 3 H(+). Methylates ribosomal protein L11. This chain is Ribosomal protein L11 methyltransferase, found in Dechloromonas aromatica (strain RCB).